The following is a 297-amino-acid chain: Cbb3-type cytochrome c oxidase subunit CcoP (297 aa).

Topologically, residues 1 to 35 are cytoplasmic; the sequence is MSKKPTTKKEVQTTGHQWDGIEELNTPLPRWWLWT. Residues 36-56 form a helical membrane-spanning segment; the sequence is FYATIIWGVAYSIAMPAWPIF. Topologically, residues 57–297 are periplasmic; that stretch reads SDKATPGLLG…SYVHSLGGGQ (241 aa). Cytochrome c domains lie at 108 to 199 and 206 to 294; these read YTRN…LQIS and VKAT…HSLG. Heme c-binding residues include C121, C124, H125, M174, C219, C222, H223, and M264.

It belongs to the CcoP / FixP family. In terms of assembly, component of the cbb3-type cytochrome c oxidase at least composed of CcoN, CcoO, CcoQ and CcoP. Interacts with CcoQ. Heme c serves as cofactor.

The protein localises to the cell inner membrane. The protein operates within energy metabolism; oxidative phosphorylation. C-type cytochrome. Part of the cbb3-type cytochrome c oxidase complex. CcoP subunit is required for transferring electrons from donor cytochrome c via its heme groups to CcoO subunit. From there, electrons are shuttled to the catalytic binuclear center of CcoN subunit where oxygen reduction takes place. The complex also functions as a proton pump. This is Cbb3-type cytochrome c oxidase subunit CcoP from Rhodobacter capsulatus (Rhodopseudomonas capsulata).